The chain runs to 240 residues: uncharacterized protein (240 aa).

2 disordered regions span residues 125-148 and 177-240; these read RRLD…EDVD and DESN…RKSR. Residues 130–148 show a composition bias toward acidic residues; that stretch reads SSEDGEEEEENDYIDEDVD. Basic and acidic residues predominate over residues 192–203; sequence SPRKSHIDHDFV. Positions 204-217 are enriched in acidic residues; that stretch reads IPEDEMLSEEEEQE. The residue at position 231 (Ser231) is a Phosphoserine.

This sequence belongs to the UTP5 family.

Its subcellular location is the cytoplasm. It localises to the nucleus. This is an uncharacterized protein from Schizosaccharomyces pombe (strain 972 / ATCC 24843) (Fission yeast).